Reading from the N-terminus, the 122-residue chain is Large ribosomal subunit protein uL14 (122 aa).

It belongs to the universal ribosomal protein uL14 family. In terms of assembly, part of the 50S ribosomal subunit. Forms a cluster with proteins L3 and L19. In the 70S ribosome, L14 and L19 interact and together make contacts with the 16S rRNA in bridges B5 and B8.

Binds to 23S rRNA. Forms part of two intersubunit bridges in the 70S ribosome. The polypeptide is Large ribosomal subunit protein uL14 (Brucella abortus (strain 2308)).